Consider the following 239-residue polypeptide: tRNA (guanine-N(1)-)-methyltransferase (239 aa).

Residues G108 and 127–132 (LGDFVL) each bind S-adenosyl-L-methionine.

Belongs to the RNA methyltransferase TrmD family. Homodimer.

It is found in the cytoplasm. The enzyme catalyses guanosine(37) in tRNA + S-adenosyl-L-methionine = N(1)-methylguanosine(37) in tRNA + S-adenosyl-L-homocysteine + H(+). In terms of biological role, specifically methylates guanosine-37 in various tRNAs. The sequence is that of tRNA (guanine-N(1)-)-methyltransferase from Streptococcus thermophilus (strain CNRZ 1066).